We begin with the raw amino-acid sequence, 146 residues long: Mitochondrial DnaJ homolog 2 (146 aa).

The J domain maps to 85–146 (EALLILDISA…LERSVLLRKR (62 aa)).

In terms of assembly, interacts with PAM16/TIM16 and is recruited by the PAM complex.

The protein localises to the mitochondrion inner membrane. Functionally, plays a role in mitochondrial biogenesis and protein folding. Participates in the translocation of transit peptide-containing proteins from the inner membrane into the mitochondrial matrix in an ATP-dependent manner, probably by stimulating activity of mtHSP70 (SSC1). The polypeptide is Mitochondrial DnaJ homolog 2 (MDJ2) (Saccharomyces cerevisiae (strain ATCC 204508 / S288c) (Baker's yeast)).